A 182-amino-acid polypeptide reads, in one-letter code: Ribosome maturation factor RimM (182 aa).

The 81-residue stretch at 102-182 (EEGDYYWKDL…TIEVDWDPGF (81 aa)) folds into the PRC barrel domain.

Belongs to the RimM family. Binds ribosomal protein uS19.

The protein localises to the cytoplasm. Its function is as follows. An accessory protein needed during the final step in the assembly of 30S ribosomal subunit, possibly for assembly of the head region. Essential for efficient processing of 16S rRNA. May be needed both before and after RbfA during the maturation of 16S rRNA. It has affinity for free ribosomal 30S subunits but not for 70S ribosomes. The protein is Ribosome maturation factor RimM of Klebsiella pneumoniae (strain 342).